Reading from the N-terminus, the 118-residue chain is NILQFRKMIQCANKGSRAAWHYLDYGCYCGPGGRGTPVDELDRCCKIHDDCYIEAGKDGCYPKLTWYSWDCTGDAPTCNPKSKCKDFVCACDAAAAKCFAKAPYNKANWNIDTKTRCK.

Intrachain disulfides connect C11–C71, C27–C117, C29–C45, C44–C98, C51–C91, C60–C84, and C78–C89. Positions 28, 30, and 32 each coordinate Ca(2+). H48 is a catalytic residue. Ca(2+) is bound at residue D49. D92 is a catalytic residue.

This sequence belongs to the phospholipase A2 family. Group I subfamily. D49 sub-subfamily. Requires Ca(2+) as cofactor. In terms of tissue distribution, expressed by the venom gland.

It is found in the secreted. The enzyme catalyses a 1,2-diacyl-sn-glycero-3-phosphocholine + H2O = a 1-acyl-sn-glycero-3-phosphocholine + a fatty acid + H(+). Functionally, PLA2 catalyzes the calcium-dependent hydrolysis of the 2-acyl groups in 3-sn-phosphoglycerides. This is Basic phospholipase A2 PA-13 from Pseudechis australis (Mulga snake).